The following is a 302-amino-acid chain: MIPNNTQFSNPIFGRILTAMVTPFKENGGVDYELAIKLANHLCENGSDGIVLCGTTGESPTLSWDEQHNLFVAVKSSLNSRSKVIVGTGSNCTSEAIEATKKAYEFGADGALVVVPYYNKPPQEGLYNHFSSIATAASDLPLMLYNIPGRTGCNLLPTTVNKLMNFPNILSIKAASGRIEEVTELRAACGPKLFIYSGDDSLLLPMLSVGAVGVVSVASHIVGLQLKMMIESFQKGEFSIALDIHEKLQPLFKALFETTNPIPIKAALELTGWQVGSPRNPLTPLIKEKKDNLFQIIQNLSL.

Thr-56 is a pyruvate binding site. The active-site Proton donor/acceptor is the Tyr-145. The active-site Schiff-base intermediate with substrate is the Lys-173. Val-215 contributes to the pyruvate binding site.

This sequence belongs to the DapA family. As to quaternary structure, homotetramer; dimer of dimers.

It localises to the cytoplasm. The catalysed reaction is L-aspartate 4-semialdehyde + pyruvate = (2S,4S)-4-hydroxy-2,3,4,5-tetrahydrodipicolinate + H2O + H(+). The protein operates within amino-acid biosynthesis; L-lysine biosynthesis via DAP pathway; (S)-tetrahydrodipicolinate from L-aspartate: step 3/4. Its function is as follows. Catalyzes the condensation of (S)-aspartate-beta-semialdehyde [(S)-ASA] and pyruvate to 4-hydroxy-tetrahydrodipicolinate (HTPA). The sequence is that of 4-hydroxy-tetrahydrodipicolinate synthase from Prochlorococcus marinus (strain MIT 9515).